We begin with the raw amino-acid sequence, 120 residues long: Holo-[acyl-carrier-protein] synthase (120 aa).

Aspartate 6 and glutamate 55 together coordinate Mg(2+).

It belongs to the P-Pant transferase superfamily. AcpS family. Requires Mg(2+) as cofactor.

It is found in the cytoplasm. It carries out the reaction apo-[ACP] + CoA = holo-[ACP] + adenosine 3',5'-bisphosphate + H(+). In terms of biological role, transfers the 4'-phosphopantetheine moiety from coenzyme A to a Ser of acyl-carrier-protein. This is Holo-[acyl-carrier-protein] synthase from Pelodictyon phaeoclathratiforme (strain DSM 5477 / BU-1).